Here is a 744-residue protein sequence, read N- to C-terminus: Eukaryotic translation initiation factor 3 subunit B (744 aa).

Residues 1-20 are disordered; that stretch reads MAPSFDHLPDPEEDEYDEEE. A compositionally biased stretch (acidic residues) spans 11–20; it reads PEEDEYDEEE. Residues 40–126 form the RRM domain; sequence TFVVIDGLPE…HTLRVNKLTD (87 aa). 4 WD repeats span residues 193-232, 234-290, 307-348, and 577-622; these read DRQH…RQKR, AHPF…PLRS, PVKR…LLDK, and ADHY…LREE. The span at 699–714 shows a compositional bias: basic and acidic residues; it reads EREDAGLPRDPLEPLK. Positions 699 to 722 are disordered; sequence EREDAGLPRDPLEPLKSKMASGDE.

This sequence belongs to the eIF-3 subunit B family. Component of the eukaryotic translation initiation factor 3 (eIF-3) complex.

The protein localises to the cytoplasm. RNA-binding component of the eukaryotic translation initiation factor 3 (eIF-3) complex, which is involved in protein synthesis of a specialized repertoire of mRNAs and, together with other initiation factors, stimulates binding of mRNA and methionyl-tRNAi to the 40S ribosome. The eIF-3 complex specifically targets and initiates translation of a subset of mRNAs involved in cell proliferation. This Sclerotinia sclerotiorum (strain ATCC 18683 / 1980 / Ss-1) (White mold) protein is Eukaryotic translation initiation factor 3 subunit B (prt1).